The following is an 84-amino-acid chain: CDC42 small effector protein 2 (84 aa).

2 S-palmitoyl cysteine lipidation sites follow: Cys10 and Cys11. The region spanning 29 to 42 is the CRIB domain; that stretch reads IGEPTNFVHTAHVG. 2 positions are modified to phosphoserine: Ser43 and Ser52.

It belongs to the CDC42SE/SPEC family. As to quaternary structure, interacts with CDC42 (in GTP-bound form). Interacts weakly with RAC1 and not at all with RHOA. As to expression, widely expressed. Expressed at higher level in T-lymphocytes. Highly expressed in CCRF-CEM T-lymphocytes, Jurkat T-lymphocytes, and Raji B-lymphocytes compared (at protein level).

It localises to the cytoplasm. Its subcellular location is the cytoskeleton. The protein localises to the cell membrane. The protein resides in the cell projection. It is found in the phagocytic cup. Its function is as follows. Probably involved in the organization of the actin cytoskeleton by acting downstream of CDC42, inducing actin filament assembly. Alters CDC42-induced cell shape changes. In activated T-cells, may play a role in CDC42-mediated F-actin accumulation at the immunological synapse. May play a role in early contractile events in phagocytosis in macrophages. This is CDC42 small effector protein 2 (CDC42SE2) from Homo sapiens (Human).